The chain runs to 454 residues: Inner membrane permease YgbN (454 aa).

Residue Met-1 is a topological domain, periplasmic. Residues 2–22 (STITLLCIALAGVIMLLLLVI) traverse the membrane as a helical segment. Over 23–27 (KAKVQ) the chain is Cytoplasmic. The helical transmembrane segment at 28-48 (PFVALLLVSLLVALAAGIPAG) threads the bilayer. Topologically, residues 49–52 (EVGK) are periplasmic. A helical membrane pass occupies residues 53-73 (VMIAGMGGVLGSVTIIIGLGA). The Cytoplasmic segment spans residues 74–108 (MLGRMIEHSGGAESLANYFSRKLGDKRTIAALTLA). A helical membrane pass occupies residues 109–129 (AFFLGIPVFFDVGFIILAPII). Topologically, residues 130 to 137 (YGFAKVAK) are periplasmic. A helical transmembrane segment spans residues 138–158 (ISPLKFGLPVAGIMLTVHVAV). Topologically, residues 159–174 (PPHPGPVAAAGLLHAD) are cytoplasmic. The chain crosses the membrane as a helical span at residues 175–195 (IGWLTIIGIAISIPVGVVGYF). Residues 196–235 (AAKIINKRQYAMSVEVLEQMQLAPASEEGATKLSDKINPP) lie on the Periplasmic side of the membrane. Residues 236–256 (GVALVTSLIVIPIAIIMAGTV) traverse the membrane as a helical segment. At 257-273 (SATLMPPSHPLLGTLQL) the chain is on the cytoplasmic side. The helical transmembrane segment at 274-294 (IGSPMVALMIALVLAFWLLAL) threads the bilayer. The Periplasmic segment spans residues 295-305 (RRGWSLQHTSD). The chain crosses the membrane as a helical span at residues 306–326 (IMGSALPTAAVVILVTGAGGV). Residues 327–341 (FGKVLVESGVGKALA) lie on the Cytoplasmic side of the membrane. Residues 342–362 (NMLQMIDLPLLPAAFIISLAL) traverse the membrane as a helical segment. Residues 363–383 (RASQGSATVAILTTGGLLSEA) lie on the Periplasmic side of the membrane. Residues 384 to 404 (VMGLNPIQCVLVTLAACFGGL) form a helical membrane-spanning segment. At 405-433 (GASHINDSGFWIVTKYLGLSVADGLKTWT) the chain is on the cytoplasmic side. A helical transmembrane segment spans residues 434–454 (VLTTILGFTGFLITWCVWAVI).

It belongs to the GntP permease family.

It localises to the cell inner membrane. The protein is Inner membrane permease YgbN (ygbN) of Escherichia coli (strain K12).